The primary structure comprises 478 residues: Zinc metalloproteinase/disintegrin (478 aa).

Residues 1–20 (MIQVLLVTICLAAFPYQGSS) form the signal peptide. A propeptide spanning residues 21–188 (IILESGNVND…PIKKVSQLNL (168 aa)) is cleaved from the precursor. One can recognise a Peptidase M12B domain in the interval 194-391 (RHVDIVVVVD…QNPQCILNKP (198 aa)). Cysteines 207 and 248 form a disulfide. N279 carries an N-linked (GlcNAc...) (complex) asparagine glycan. Cystine bridges form between C305-C386, C345-C370, and C347-C353. H330 is a binding site for Zn(2+). The active site involves E331. Residues H334 and H340 each coordinate Zn(2+). N369 is a glycosylation site (N-linked (GlcNAc...) (complex) asparagine). Residues 392-407 (LRTVSIPVSGNEHLEA) constitute a propeptide that is removed on maturation. A Disintegrin domain is found at 397-478 (IPVSGNEHLE…ADCPRYHSHA (82 aa)). 6 cysteine pairs are disulfide-bonded: C411/C426, C413/C421, C420/C443, C434/C440, C439/C464, and C452/C471. A Cell attachment site motif is present at residues 456 to 458 (RGD). Residues 476 to 478 (SHA) constitute a propeptide that is removed on maturation.

Belongs to the venom metalloproteinase (M12B) family. P-II subfamily. P-IIa sub-subfamily. Monomeric (disintegrin). The cofactor is Zn(2+). In terms of processing, glycans are composed of 4 GlcNAc, 3 Man, 2 Gal, 2 NeuAC and 1 Fuc residue. In terms of tissue distribution, expressed by the venom gland.

The protein resides in the secreted. In terms of biological role, impairs hemostasis in the envenomed animal. Its function is as follows. Inhibits platelet aggregation induced by ADP, thrombin, platelet-activating factor and collagen. Acts by inhibiting fibrinogen interaction with platelet receptors alpha-IIb/beta-3 (ITGA2B/ITGB3). The protein is Zinc metalloproteinase/disintegrin of Calloselasma rhodostoma (Malayan pit viper).